Reading from the N-terminus, the 192-residue chain is Ras-like GTP-binding protein Rho1 (192 aa).

12 to 19 (GDGACGKT) serves as a coordination point for GTP. The short motif at 34 to 42 (YVPTVFENY) is the Effector region element. GTP is bound by residues 59–63 (DTAGQ) and 117–120 (NKKD). C189 is modified (cysteine methyl ester). The S-geranylgeranyl cysteine moiety is linked to residue C189. Residues 190 to 192 (LLL) constitute a propeptide, removed in mature form.

This sequence belongs to the small GTPase superfamily. Rho family. Interacts with capu. Interacts (via REM repeats) with Pkn (via N-terminus). Interacts (via N-terminus) with wash (via N-terminus). May interact with dia/diaphanous (via CBD/FH3 domain). Expressed in hemocytes (at protein level).

It is found in the cell membrane. The protein localises to the cytoplasm. Its subcellular location is the cytoskeleton. The protein resides in the apical cell membrane. It localises to the lateral cell membrane. Functionally, has a role in regulating actin cytoskeletal organization: required during early development for proper execution of morphogenetic movements of individual cells and groups of cells important for the formation of the embryonic body plan. Plays a role in regulating dorsal closure during embryogenesis. During axis elongation, required for Rho-kinase Rok planar polarity and adherens junction localization as well as for generating a planar polarized distribution of the actin-binding protein Shrm. During embryogenesis, acts upstream of wash to regulate the developmental migration of tail hemocytes anteriorly along the ventral midline. May have a role in eye development. Involved in targeted recruitment of dia/diaphanous to apical membranes of polarized epithelial cells. The protein is Ras-like GTP-binding protein Rho1 of Drosophila melanogaster (Fruit fly).